Here is a 351-residue protein sequence, read N- to C-terminus: Modulator of apoptosis 1 (351 aa).

The LIR motif lies at 49-52; sequence YRLL. Positions 120-127 are BH3-like; it reads LTRALAHE. Positions 202 to 205 are RASSF1-binding; that stretch reads KRRR.

The protein belongs to the PNMA family. In terms of assembly, homodimer. Under normal circumstances, held in an inactive conformation by an intramolecular interaction. Interacts with BAX. Binding to RASSF1 isoform A (RASSF1A) relieves this inhibitory interaction and allows further binding to BAX. Also binds to BCL2 and BCLX. Recruited to the TNFRSF1A and TNFRSF10A complexes in response to their respective cognate ligand, after internalization. Interacts with TRIM39. Interacts with RASSF6. Interacts with ATG8 proteins MAP1LC3A, MAP1LC3B and MAP1LC3C. Does not interact with ATG8 proteins GABARAPL1, GABARAPL2 and GABARAP. Interacts with SQSTM1; promoting dissociation of SQSTM1 inclusion bodies that sequester KEAP1. In terms of processing, ubiquitinated and degraded during mitotic exit by APC/C-Cdh1, this modification is inhibited by TRIM39.

The protein localises to the cytoplasm. The protein resides in the cytosol. It localises to the mitochondrion outer membrane. It is found in the extracellular vesicle membrane. Its function is as follows. Retrotransposon-derived protein that forms virion-like capsids. Acts as an effector of BAX during apoptosis: enriched at outer mitochondria membrane and associates with BAX upon induction of apoptosis, facilitating BAX-dependent mitochondrial outer membrane permeabilization and apoptosis. Required for death receptor-dependent apoptosis. When associated with RASSF1, promotes BAX conformational change and translocation to mitochondrial membranes in response to TNF and TNFSF10 stimulation. Also promotes autophagy: promotes phagophore closure via association with ATG8 proteins. Acts as an inhibitor of the NFE2L2/NRF2 pathway via interaction with SQSTM1: interaction promotes dissociation of SQSTM1 inclusion bodies that sequester KEAP1, relieving inactivation of the BCR(KEAP1) complex. This Macaca fascicularis (Crab-eating macaque) protein is Modulator of apoptosis 1.